We begin with the raw amino-acid sequence, 638 residues long: DNA mismatch repair protein MutL (638 aa).

The disordered stretch occupies residues 398 to 435; sequence GREGTSFGTQTNAFGSMATPRDNSRGSYSAGESRQRTE.

The protein belongs to the DNA mismatch repair MutL/HexB family.

This protein is involved in the repair of mismatches in DNA. It is required for dam-dependent methyl-directed DNA mismatch repair. May act as a 'molecular matchmaker', a protein that promotes the formation of a stable complex between two or more DNA-binding proteins in an ATP-dependent manner without itself being part of a final effector complex. The polypeptide is DNA mismatch repair protein MutL (Shewanella baltica (strain OS155 / ATCC BAA-1091)).